A 20-amino-acid polypeptide reads, in one-letter code: Transcriptional regulatory protein PufK (20 aa).

Positions 1–11 (MVPYRNPRHQH) are enriched in basic residues. Residues 1–20 (MVPYRNPRHQHVASVLRSGG) are disordered.

Its function is as follows. Involved in the transcriptional regulation of pufB. The polypeptide is Transcriptional regulatory protein PufK (pufK) (Cereibacter sphaeroides (strain ATCC 17023 / DSM 158 / JCM 6121 / CCUG 31486 / LMG 2827 / NBRC 12203 / NCIMB 8253 / ATH 2.4.1.) (Rhodobacter sphaeroides)).